The sequence spans 146 residues: Large ribosomal subunit protein bL9 (146 aa).

It belongs to the bacterial ribosomal protein bL9 family. As to quaternary structure, part of the 50S ribosomal subunit. Contacts protein L31.

Its function is as follows. Binds to the 23S rRNA and protein L31. This is Large ribosomal subunit protein bL9 (rplI) from Deinococcus radiodurans (strain ATCC 13939 / DSM 20539 / JCM 16871 / CCUG 27074 / LMG 4051 / NBRC 15346 / NCIMB 9279 / VKM B-1422 / R1).